A 369-amino-acid chain; its full sequence is Histidine decarboxylase (369 aa).

Position 119 (His-119) interacts with substrate. N6-(pyridoxal phosphate)lysine is present on Lys-230.

This sequence belongs to the group II decarboxylase family. Homotetramer. Requires pyridoxal 5'-phosphate as cofactor.

It carries out the reaction L-histidine + H(+) = histamine + CO2. This is Histidine decarboxylase from Mesorhizobium japonicum (strain LMG 29417 / CECT 9101 / MAFF 303099) (Mesorhizobium loti (strain MAFF 303099)).